Here is a 265-residue protein sequence, read N- to C-terminus: Anamorsin homolog 1 (265 aa).

The N-terminal SAM-like domain stretch occupies residues 1-143 (MAATVAEALA…KVSWSLGSSF (143 aa)). The tract at residues 144–175 (PLKKATKGLPKIQIDDDSELIDEDSLLTEDDL) is linker. Positions 186, 195, 198, and 200 each coordinate [2Fe-2S] cluster. The tract at residues 186 to 200 (CEVGATRKACKNCTC) is fe-S binding site A. Cys-226, Cys-229, Cys-237, and Cys-240 together coordinate [4Fe-4S] cluster. 2 consecutive short sequence motifs (cx2C motif) follow at residues 226-229 (CGNC) and 237-240 (CGTC). The segment at 226–240 (CGNCGLGDAFRCGTC) is fe-S binding site B.

It belongs to the anamorsin family. Monomer. Requires [2Fe-2S] cluster as cofactor. The cofactor is [4Fe-4S] cluster.

It localises to the cytoplasm. The protein resides in the mitochondrion intermembrane space. Component of the cytosolic iron-sulfur (Fe-S) protein assembly (CIA) machinery. Required for the maturation of extramitochondrial Fe-S proteins. Part of an electron transfer chain functioning in an early step of cytosolic Fe-S biogenesis, facilitating the de novo assembly of a [4Fe-4S] cluster on the cytosolic Fe-S scaffold complex. Electrons are transferred from NADPH via a FAD- and FMN-containing diflavin oxidoreductase. Together with the diflavin oxidoreductase, also required for the assembly of the diferric tyrosyl radical cofactor of ribonucleotide reductase (RNR), probably by providing electrons for reduction during radical cofactor maturation in the catalytic small subunit. In Oryza sativa subsp. japonica (Rice), this protein is Anamorsin homolog 1.